The following is a 96-amino-acid chain: ESAT-6-like protein SAG1039 (96 aa).

The protein belongs to the WXG100 family. sagEsxA-like subfamily. Homodimer.

The polypeptide is ESAT-6-like protein SAG1039 (Streptococcus agalactiae serotype V (strain ATCC BAA-611 / 2603 V/R)).